Reading from the N-terminus, the 263-residue chain is L-histidine 2-aminobutanoyltransferase (263 aa).

It belongs to the methyltransferase superfamily. CntL family. As to quaternary structure, interacts with CntM.

It catalyses the reaction L-histidine + S-adenosyl-L-methionine = (2S)-2-amino-4-{[(1S)-1-carboxy-2-(1H-imidazol-4-yl)ethyl]amino}butanoate + S-methyl-5'-thioadenosine + H(+). In terms of biological role, catalyzes the nucleophilic attack of one alpha-aminobutanoate moiety from SAM onto L-histidine to produce the intermediate (2S)-2-amino-4-{[(1S)-1-carboxy-2-(1H-imidazol-4-yl)ethyl]amino}butanoate. Functions in the biosynthesis of the metallophore pseudopaline, which is involved in the acquisition of nickel and zinc, and thus enables bacterial growth inside the host, where metal access is limited. Therefore, this enzyme probably contributes to Pseudomonas virulence. Cannot use D-histidine in place of L-histidine as substrate. The chain is L-histidine 2-aminobutanoyltransferase from Pseudomonas aeruginosa (strain UCBPP-PA14).